A 410-amino-acid polypeptide reads, in one-letter code: Elongation factor Tu, apicoplast (410 aa).

The region spanning 10 to 214 (KQHINLGTIG…QIIDNIIIPT (205 aa)) is the tr-type G domain. The segment at 19–26 (GHVDHGKT) is G1. Residue 19 to 26 (GHVDHGKT) coordinates GTP. Residue Thr26 participates in Mg(2+) binding. The interval 60–64 (GITIN) is G2. Positions 81 to 84 (DCPG) are G3. Residues 81-85 (DCPGH) and 136-139 (NKED) each bind GTP. Residues 136–139 (NKED) are G4. Residues 174–176 (SAL) are G5.

It belongs to the TRAFAC class translation factor GTPase superfamily. Classic translation factor GTPase family. EF-Tu/EF-1A subfamily.

Its subcellular location is the plastid. The protein localises to the apicoplast. It catalyses the reaction GTP + H2O = GDP + phosphate + H(+). In terms of biological role, GTP hydrolase that promotes the GTP-dependent binding of aminoacyl-tRNA to the A-site of ribosomes during protein biosynthesis. The protein is Elongation factor Tu, apicoplast (tufA) of Plasmodium falciparum (isolate 3D7).